The following is a 505-amino-acid chain: MQQRELNYLFLKRIGINTHQEPVVYMRQDCHVCRSEGFNAHSRVRVTTNKRSIIATVHQVTDGWLSHQEAGLSDAAWRLLEAEDGEVAYFSHTKAVDSMSHVRGKLYGASLTQESADEVVKDVAGGLYSDVQLAAFVTACAGSRLNQDEVAALTSAMVKVGQRIDWGTSPIMDKHCVGGLPGNRTTPIVVAIVTACGLRMPKTSSRAITSPAGTADTMETMAPVNLTLAQMKKVVEQEGGCIAWGGSVSLSPADDVLIRIERALDLDSEGQLVASVISKKVAAGSTHVLIDIPIGMTAKVRSPEYAERLASHMRYTGVKLGIQVEAMFTDGAQPVGRGIGPALEARDILAVLRNQAEAPADLRVRALTLAGRLLEIGGVASHGAGVARARETLESGAALHKFMAICEAQGGFREPALAPHCYEATADRVGVVSFVNNRFVAKLAKLAGAPSNSSAGVDFHVKLGQKVRVGEPLFSIYAEAPGELAYALDFLRDHPNEIRIEEESL.

Belongs to the thymidine/pyrimidine-nucleoside phosphorylase family. Type 2 subfamily.

It catalyses the reaction thymidine + phosphate = 2-deoxy-alpha-D-ribose 1-phosphate + thymine. The sequence is that of Putative thymidine phosphorylase from Hahella chejuensis (strain KCTC 2396).